The sequence spans 315 residues: Homoserine kinase (315 aa).

97–107 (PPARGLGSSAT) contacts ATP.

Belongs to the GHMP kinase family. Homoserine kinase subfamily.

Its subcellular location is the cytoplasm. The catalysed reaction is L-homoserine + ATP = O-phospho-L-homoserine + ADP + H(+). The protein operates within amino-acid biosynthesis; L-threonine biosynthesis; L-threonine from L-aspartate: step 4/5. Its function is as follows. Catalyzes the ATP-dependent phosphorylation of L-homoserine to L-homoserine phosphate. The sequence is that of Homoserine kinase from Synechococcus sp. (strain WH7803).